Consider the following 209-residue polypeptide: Outer-membrane lipoprotein carrier protein (209 aa).

An N-terminal signal peptide occupies residues 1-21; it reads MKLLKLLSVAALSAASMMANA.

The protein belongs to the LolA family. In terms of assembly, monomer.

Its subcellular location is the periplasm. Its function is as follows. Participates in the translocation of lipoproteins from the inner membrane to the outer membrane. Only forms a complex with a lipoprotein if the residue after the N-terminal Cys is not an aspartate (The Asp acts as a targeting signal to indicate that the lipoprotein should stay in the inner membrane). The chain is Outer-membrane lipoprotein carrier protein from Hahella chejuensis (strain KCTC 2396).